A 764-amino-acid polypeptide reads, in one-letter code: 5-methyltetrahydropteroyltriglutamate--homocysteine methyltransferase (764 aa).

Residues Arg-16–Lys-19 and Lys-121 each bind 5-methyltetrahydropteroyltri-L-glutamate. L-homocysteine contacts are provided by residues Ile-440–Ser-442 and Glu-493. Residues Ile-440 to Ser-442 and Glu-493 each bind L-methionine. 5-methyltetrahydropteroyltri-L-glutamate contacts are provided by residues Arg-524–Cys-525 and Trp-570. Asp-608 is a binding site for L-homocysteine. Asp-608 serves as a coordination point for L-methionine. Glu-614 serves as a coordination point for 5-methyltetrahydropteroyltri-L-glutamate. His-650, Cys-652, and Glu-674 together coordinate Zn(2+). The active-site Proton donor is His-703. Cys-735 contacts Zn(2+).

It belongs to the vitamin-B12 independent methionine synthase family. Zn(2+) is required as a cofactor.

It carries out the reaction 5-methyltetrahydropteroyltri-L-glutamate + L-homocysteine = tetrahydropteroyltri-L-glutamate + L-methionine. It functions in the pathway amino-acid biosynthesis; L-methionine biosynthesis via de novo pathway; L-methionine from L-homocysteine (MetE route): step 1/1. Catalyzes the transfer of a methyl group from 5-methyltetrahydrofolate to homocysteine resulting in methionine formation. This Burkholderia ambifaria (strain ATCC BAA-244 / DSM 16087 / CCUG 44356 / LMG 19182 / AMMD) (Burkholderia cepacia (strain AMMD)) protein is 5-methyltetrahydropteroyltriglutamate--homocysteine methyltransferase.